Consider the following 140-residue polypeptide: Putative pre-16S rRNA nuclease (140 aa).

Belongs to the YqgF nuclease family.

It localises to the cytoplasm. Functionally, could be a nuclease involved in processing of the 5'-end of pre-16S rRNA. This Moorella thermoacetica (strain ATCC 39073 / JCM 9320) protein is Putative pre-16S rRNA nuclease.